The chain runs to 440 residues: Probable secretory pathway GDP dissociation inhibitor 1 (440 aa).

This sequence belongs to the Rab GDI family.

The polypeptide is Probable secretory pathway GDP dissociation inhibitor 1 (gdi1) (Schizosaccharomyces pombe (strain 972 / ATCC 24843) (Fission yeast)).